We begin with the raw amino-acid sequence, 370 residues long: Phospho-N-acetylmuramoyl-pentapeptide-transferase (370 aa).

Transmembrane regions (helical) follow at residues 15–35 (PLEG…AAFA), 44–64 (LLSL…WWGV), 93–113 (MGGL…SWSG), 115–135 (AAEQ…VGGI), 155–175 (LLLQ…RGWI), 183–203 (FDIN…VFLA), 213–233 (GLDG…ALQL), 240–260 (GDPS…GFLV), 268–288 (VFMG…VALL), 296–316 (LIMG…VWVF), and 347–367 (QLVV…GIFF).

This sequence belongs to the glycosyltransferase 4 family. MraY subfamily. It depends on Mg(2+) as a cofactor.

Its subcellular location is the cell inner membrane. The enzyme catalyses UDP-N-acetyl-alpha-D-muramoyl-L-alanyl-gamma-D-glutamyl-meso-2,6-diaminopimeloyl-D-alanyl-D-alanine + di-trans,octa-cis-undecaprenyl phosphate = di-trans,octa-cis-undecaprenyl diphospho-N-acetyl-alpha-D-muramoyl-L-alanyl-D-glutamyl-meso-2,6-diaminopimeloyl-D-alanyl-D-alanine + UMP. Its pathway is cell wall biogenesis; peptidoglycan biosynthesis. Functionally, catalyzes the initial step of the lipid cycle reactions in the biosynthesis of the cell wall peptidoglycan: transfers peptidoglycan precursor phospho-MurNAc-pentapeptide from UDP-MurNAc-pentapeptide onto the lipid carrier undecaprenyl phosphate, yielding undecaprenyl-pyrophosphoryl-MurNAc-pentapeptide, known as lipid I. The sequence is that of Phospho-N-acetylmuramoyl-pentapeptide-transferase from Synechococcus sp. (strain CC9311).